A 316-amino-acid polypeptide reads, in one-letter code: uncharacterized protein (316 aa).

Helical transmembrane passes span 74-94 (IPVL…GMAI), 99-119 (WPYA…IFLG), 166-186 (MAGC…TVLG), and 188-208 (VEGF…GYIF).

The protein resides in the cell membrane. This is an uncharacterized protein from Synechocystis sp. (strain ATCC 27184 / PCC 6803 / Kazusa).